We begin with the raw amino-acid sequence, 315 residues long: Methionyl-tRNA formyltransferase (315 aa).

113–116 provides a ligand contact to (6S)-5,6,7,8-tetrahydrofolate; that stretch reads SILP.

This sequence belongs to the Fmt family.

The catalysed reaction is L-methionyl-tRNA(fMet) + (6R)-10-formyltetrahydrofolate = N-formyl-L-methionyl-tRNA(fMet) + (6S)-5,6,7,8-tetrahydrofolate + H(+). Attaches a formyl group to the free amino group of methionyl-tRNA(fMet). The formyl group appears to play a dual role in the initiator identity of N-formylmethionyl-tRNA by promoting its recognition by IF2 and preventing the misappropriation of this tRNA by the elongation apparatus. The chain is Methionyl-tRNA formyltransferase from Vibrio vulnificus (strain YJ016).